The chain runs to 595 residues: METIRNFSIIAHVDHGKSTISDRLIQICGGLSKREMHSQVLDSMDLEKERGITIKSQSVTIEYKSKCNKIIQMNFIDTPGHVDFSYEVSRSLSACEGALLIIDATQGVEAQTIANCHTALDMNLKVIPILNKIDLPTADPQRVKKEIEDIIGLSTNNIILCSAKTGTGITNLLETITHNIPYPKGNPNDPLQALIIDSWFDCYLGVVSLVRVKNGYLTKKTKIQIMSTKKIYNIEKIGIFTPKPIFKDILKCGEVGWIICGIRNITGAPVGDTITQHPNSAKKVLSGFKKIKPKIYAGLFTIQSNQFSLFRDALGKLSLNDASLFYEPEHSLALGHGFRCGFLGILHMEIVQARLEREYNLQIIATSPTVIYKIIMIDNTNYYLDTPHKLSTLQKIKEIREPIAKCLILLPIKYLGNTLLLCSQRRGVQNDISYYNNQILLDYSIPMSEVVLNFFDQLKSVSSGYASLEYNFELYKVAHVKCLDILVNYKKIDSLSTIVHKTKILNQAKNVVEKMKNLIPRHQFDIIIQAVIGTKVIVRTTIKQLRKNVLAKCYGGDVTRKKKLLKKQKIGKKRMKQIGNITIPQEVFLKILNNN.

The region spanning 2–184 (ETIRNFSIIA…TITHNIPYPK (183 aa)) is the tr-type G domain. Residues 14–19 (DHGKST) and 131–134 (NKID) each bind GTP.

It belongs to the TRAFAC class translation factor GTPase superfamily. Classic translation factor GTPase family. LepA subfamily.

It is found in the cell membrane. The catalysed reaction is GTP + H2O = GDP + phosphate + H(+). Required for accurate and efficient protein synthesis under certain stress conditions. May act as a fidelity factor of the translation reaction, by catalyzing a one-codon backward translocation of tRNAs on improperly translocated ribosomes. Back-translocation proceeds from a post-translocation (POST) complex to a pre-translocation (PRE) complex, thus giving elongation factor G a second chance to translocate the tRNAs correctly. Binds to ribosomes in a GTP-dependent manner. The protein is Elongation factor 4 of Buchnera aphidicola subsp. Baizongia pistaciae (strain Bp).